The sequence spans 348 residues: Nicotinate-nucleotide--dimethylbenzimidazole phosphoribosyltransferase (348 aa).

Glu316 acts as the Proton acceptor in catalysis.

It belongs to the CobT family.

It catalyses the reaction 5,6-dimethylbenzimidazole + nicotinate beta-D-ribonucleotide = alpha-ribazole 5'-phosphate + nicotinate + H(+). It participates in nucleoside biosynthesis; alpha-ribazole biosynthesis; alpha-ribazole from 5,6-dimethylbenzimidazole: step 1/2. Functionally, catalyzes the synthesis of alpha-ribazole-5'-phosphate from nicotinate mononucleotide (NAMN) and 5,6-dimethylbenzimidazole (DMB). This Xanthomonas axonopodis pv. citri (strain 306) protein is Nicotinate-nucleotide--dimethylbenzimidazole phosphoribosyltransferase.